We begin with the raw amino-acid sequence, 508 residues long: Photosystem II CP47 reaction center protein (508 aa).

The next 6 membrane-spanning stretches (helical) occupy residues 21-36 (AVHI…WAGS), 101-115 (IVFS…IWHW), 140-156 (GIHL…FGAF), 203-218 (IAAG…FHLS), 237-252 (VLSS…AFVV), and 457-472 (SFAL…HGAR).

Belongs to the PsbB/PsbC family. PsbB subfamily. In terms of assembly, PSII is composed of 1 copy each of membrane proteins PsbA, PsbB, PsbC, PsbD, PsbE, PsbF, PsbH, PsbI, PsbJ, PsbK, PsbL, PsbM, PsbT, PsbX, PsbY, PsbZ, Psb30/Ycf12, at least 3 peripheral proteins of the oxygen-evolving complex and a large number of cofactors. It forms dimeric complexes. It depends on Binds multiple chlorophylls. PSII binds additional chlorophylls, carotenoids and specific lipids. as a cofactor.

Its subcellular location is the plastid. The protein resides in the chloroplast thylakoid membrane. In terms of biological role, one of the components of the core complex of photosystem II (PSII). It binds chlorophyll and helps catalyze the primary light-induced photochemical processes of PSII. PSII is a light-driven water:plastoquinone oxidoreductase, using light energy to abstract electrons from H(2)O, generating O(2) and a proton gradient subsequently used for ATP formation. The polypeptide is Photosystem II CP47 reaction center protein (Ranunculus macranthus (Large buttercup)).